Here is a 292-residue protein sequence, read N- to C-terminus: Hydroxysqualene synthase (292 aa).

Belongs to the phytoene/squalene synthase family. HpnC subfamily.

It catalyses the reaction presqualene diphosphate + H2O = hydroxysqualene + diphosphate. Its pathway is secondary metabolite biosynthesis; hopanoid biosynthesis. Its function is as follows. Involved in the biosynthesis of the hopanoid precursor squalene (SQ) from farnesyl diphosphate (FPP). Catalyzes the second step, the conversion of presqualene diphosphate (PSPP) to hydroxysqualene (HSQ). The polypeptide is Hydroxysqualene synthase (Rhodopseudomonas palustris (strain ATCC BAA-98 / CGA009)).